The primary structure comprises 118 residues: D-dopachrome decarboxylase-B (118 aa).

N-acetylproline is present on Pro-2.

It belongs to the MIF family. Homotrimer.

Its subcellular location is the cytoplasm. It carries out the reaction D-dopachrome + H(+) = 5,6-dihydroxyindole + CO2. Its function is as follows. Tautomerization of D-dopachrome with decarboxylation to give 5,6-dihydroxyindole (DHI). The protein is D-dopachrome decarboxylase-B (ddt-b) of Xenopus laevis (African clawed frog).